The primary structure comprises 110 residues: Ig lambda-1 chain V region S178 (110 aa).

The region spanning 1-106 (QAVVTQESAL…RWVFGGGTKL (106 aa)) is the Ig-like domain.

The polypeptide is Ig lambda-1 chain V region S178 (Mus musculus (Mouse)).